Reading from the N-terminus, the 237-residue chain is Large ribosomal subunit protein uL1 (237 aa).

Belongs to the universal ribosomal protein uL1 family. As to quaternary structure, part of the 50S ribosomal subunit.

Binds directly to 23S rRNA. The L1 stalk is quite mobile in the ribosome, and is involved in E site tRNA release. Functionally, protein L1 is also a translational repressor protein, it controls the translation of the L11 operon by binding to its mRNA. This Leptothrix cholodnii (strain ATCC 51168 / LMG 8142 / SP-6) (Leptothrix discophora (strain SP-6)) protein is Large ribosomal subunit protein uL1.